The primary structure comprises 263 residues: 3-methyl-2-oxobutanoate hydroxymethyltransferase (263 aa).

Aspartate 45 and aspartate 84 together coordinate Mg(2+). Residues 45–46 (DS), aspartate 84, and lysine 112 each bind 3-methyl-2-oxobutanoate. A Mg(2+)-binding site is contributed by glutamate 114. The active-site Proton acceptor is glutamate 180.

This sequence belongs to the PanB family. In terms of assembly, homodecamer; pentamer of dimers. It depends on Mg(2+) as a cofactor.

The protein resides in the cytoplasm. It carries out the reaction 3-methyl-2-oxobutanoate + (6R)-5,10-methylene-5,6,7,8-tetrahydrofolate + H2O = 2-dehydropantoate + (6S)-5,6,7,8-tetrahydrofolate. It participates in cofactor biosynthesis; (R)-pantothenate biosynthesis; (R)-pantoate from 3-methyl-2-oxobutanoate: step 1/2. Functionally, catalyzes the reversible reaction in which hydroxymethyl group from 5,10-methylenetetrahydrofolate is transferred onto alpha-ketoisovalerate to form ketopantoate. This Klebsiella pneumoniae (strain 342) protein is 3-methyl-2-oxobutanoate hydroxymethyltransferase.